Here is a 303-residue protein sequence, read N- to C-terminus: ATP-dependent (S)-NAD(P)H-hydrate dehydratase (303 aa).

One can recognise a YjeF C-terminal domain in the interval 12-299 (QQQLVCSVIP…AEVRTAFSML (288 aa)). Residues Gly106 and 158–164 (NAVELDR) contribute to the (6S)-NADPHX site. ATP contacts are provided by residues 194–198 (KGSED) and 213–222 (GSPRRCGGQG). Asp223 serves as a coordination point for (6S)-NADPHX.

Belongs to the NnrD/CARKD family. Mg(2+) is required as a cofactor.

It carries out the reaction (6S)-NADHX + ATP = ADP + phosphate + NADH + H(+). The catalysed reaction is (6S)-NADPHX + ATP = ADP + phosphate + NADPH + H(+). Its function is as follows. Catalyzes the dehydration of the S-form of NAD(P)HX at the expense of ATP, which is converted to ADP. Together with NAD(P)HX epimerase, which catalyzes the epimerization of the S- and R-forms, the enzyme allows the repair of both epimers of NAD(P)HX, a damaged form of NAD(P)H that is a result of enzymatic or heat-dependent hydration. In Ixodes scapularis (Black-legged tick), this protein is ATP-dependent (S)-NAD(P)H-hydrate dehydratase.